Reading from the N-terminus, the 245-residue chain is Orotidine 5'-phosphate decarboxylase (245 aa).

Residues aspartate 22, lysine 44, 71–80, threonine 131, arginine 192, glutamine 201, glycine 221, and arginine 222 each bind substrate; that span reads DLKFHDIPNT. Lysine 73 acts as the Proton donor in catalysis.

The protein belongs to the OMP decarboxylase family. Type 1 subfamily. Homodimer.

It carries out the reaction orotidine 5'-phosphate + H(+) = UMP + CO2. The protein operates within pyrimidine metabolism; UMP biosynthesis via de novo pathway; UMP from orotate: step 2/2. Functionally, catalyzes the decarboxylation of orotidine 5'-monophosphate (OMP) to uridine 5'-monophosphate (UMP). This is Orotidine 5'-phosphate decarboxylase from Yersinia pseudotuberculosis serotype O:3 (strain YPIII).